A 138-amino-acid chain; its full sequence is Large ribosomal subunit protein bL12c (138 aa).

It belongs to the bacterial ribosomal protein bL12 family. In terms of assembly, homodimer. Part of the ribosomal stalk of the 50S ribosomal subunit. Forms a multimeric L10(L12)X complex, where L10 forms an elongated spine to which 2 to 4 L12 dimers bind in a sequential fashion. Binds GTP-bound translation factors.

Its subcellular location is the plastid. Its function is as follows. Forms part of the ribosomal stalk which helps the ribosome interact with GTP-bound translation factors. Is thus essential for accurate translation. The sequence is that of Large ribosomal subunit protein bL12c from Euglena longa (Euglenophycean alga).